A 199-amino-acid polypeptide reads, in one-letter code: Recombination protein RecR (199 aa).

A C4-type zinc finger spans residues 57–72 (CEKCNNFTEEVVCELC). A Toprim domain is found at 80–175 (ALLCVVEMPA…KITRIARGLP (96 aa)).

The protein belongs to the RecR family.

In terms of biological role, may play a role in DNA repair. It seems to be involved in an RecBC-independent recombinational process of DNA repair. It may act with RecF and RecO. This chain is Recombination protein RecR, found in Nitrosospira multiformis (strain ATCC 25196 / NCIMB 11849 / C 71).